The chain runs to 341 residues: Two-component response regulator ORR30 (341 aa).

The Response regulatory domain maps to 12 to 127; it reads RVLVIDDDCS…ELSNIWQHIF (116 aa). Aspartate 63 carries the 4-aspartylphosphate modification. Positions 195-254 constitute an HTH myb-type domain; sequence DLGKSRLTWTTQLHRQFIAAVNHLGEDKAVPKKILGIMKVKHLTREQVASHLQKYRMQLK. The segment at residues 225 to 250 is a DNA-binding region (H-T-H motif); that stretch reads PKKILGIMKVKHLTREQVASHLQKYR.

This sequence belongs to the ARR family. Type-B subfamily. In terms of processing, two-component system major event consists of a His-to-Asp phosphorelay between a sensor histidine kinase (HK) and a response regulator (RR). In plants, the His-to-Asp phosphorelay involves an additional intermediate named Histidine-containing phosphotransfer protein (HPt). This multistep phosphorelay consists of a His-Asp-His-Asp sequential transfer of a phosphate group between first a His and an Asp of the HK protein, followed by the transfer to a conserved His of the HPt protein and finally the transfer to an Asp in the receiver domain of the RR protein.

The protein localises to the nucleus. In terms of biological role, transcriptional activator that acts as a floral inducer to promote short-day (SD) flowering pathway. Activates HD3A and other FT-like genes independently from HD1. May also activate MADS-box transcription factors involved in flowering regulation. Functions as a response regulator involved in His-to-Asp phosphorelay signal transduction system. Phosphorylation of the Asp residue in the receiver domain activates the ability of the protein to promote the transcription of target genes. May directly activate some type-A response regulators in response to cytokinins. The chain is Two-component response regulator ORR30 from Oryza sativa subsp. japonica (Rice).